The primary structure comprises 383 residues: MDIAGSLCNASEGPVLRPEARVSGNGDLQFLGWNVPPDQIQHIPEHWLTQLEPPASMHYMLGVFYIFLFCASTVGNGMVIWIFSTSKALRTPSNMFVLNLAVFDFIMCLKAPIFIYNSFHRGFALGNTGCQIFAAIGSYSGIGAGMTNAAIGYDRLNVITKPMNRNMTFTKAIIMNVIIWLYCTPWVVLPLTQFWDRFVPEGYLTSCTFDYLTDNFDTRLFVGTIFFFSFVCPTLMIIYYYSQIVGHVFSHEKALREQAKKMNVESLRSNVDKSKDTAEIRIAKAAITICFLFFVSWTPYGVMSLIGAFGDKSLLTPGATMIPACTCKLVACIDPFVYAISHPRYRMELQKRCPWLAIDEKAPESSSAASTTTTQEQQQTTAA.

Residues 1-57 lie on the Extracellular side of the membrane; sequence MDIAGSLCNASEGPVLRPEARVSGNGDLQFLGWNVPPDQIQHIPEHWLTQLEPPASM. Residue Asn9 is glycosylated (N-linked (GlcNAc...) asparagine). Residues 58 to 82 form a helical membrane-spanning segment; it reads HYMLGVFYIFLFCASTVGNGMVIWI. Residues 83–94 are Cytoplasmic-facing; sequence FSTSKALRTPSN. The helical transmembrane segment at 95 to 117 threads the bilayer; sequence MFVLNLAVFDFIMCLKAPIFIYN. Residues 118 to 133 lie on the Extracellular side of the membrane; that stretch reads SFHRGFALGNTGCQIF. A disulfide bridge links Cys130 with Cys207. The helical transmembrane segment at 134-153 threads the bilayer; sequence AAIGSYSGIGAGMTNAAIGY. Residues 154–171 lie on the Cytoplasmic side of the membrane; that stretch reads DRLNVITKPMNRNMTFTK. A helical transmembrane segment spans residues 172 to 196; that stretch reads AIIMNVIIWLYCTPWVVLPLTQFWD. Residues 197 to 220 lie on the Extracellular side of the membrane; the sequence is RFVPEGYLTSCTFDYLTDNFDTRL. Residues 221–248 form a helical membrane-spanning segment; the sequence is FVGTIFFFSFVCPTLMIIYYYSQIVGHV. Topologically, residues 249 to 284 are cytoplasmic; it reads FSHEKALREQAKKMNVESLRSNVDKSKDTAEIRIAK. The chain crosses the membrane as a helical span at residues 285 to 308; sequence AAITICFLFFVSWTPYGVMSLIGA. The Extracellular segment spans residues 309–316; that stretch reads FGDKSLLT. A helical membrane pass occupies residues 317–341; the sequence is PGATMIPACTCKLVACIDPFVYAIS. The residue at position 328 (Lys328) is an N6-(retinylidene)lysine. Residues 342–383 are Cytoplasmic-facing; it reads HPRYRMELQKRCPWLAIDEKAPESSSAASTTTTQEQQQTTAA. Residues 361 to 383 are disordered; the sequence is KAPESSSAASTTTTQEQQQTTAA. The span at 364-383 shows a compositional bias: low complexity; sequence ESSSAASTTTTQEQQQTTAA.

The protein belongs to the G-protein coupled receptor 1 family. Opsin subfamily. In terms of processing, phosphorylated on some or all of the serine and threonine residues present in the C-terminal region.

The protein localises to the membrane. Visual pigments are the light-absorbing molecules that mediate vision. They consist of an apoprotein, opsin, covalently linked to cis-retinal. The polypeptide is Opsin Rh4 (Rh4) (Drosophila virilis (Fruit fly)).